A 651-amino-acid polypeptide reads, in one-letter code: NADH oxidase (651 aa).

Q104 contributes to the FMN binding site. The active-site Proton donor is Y175. FMN is bound by residues R223 and 320 to 321; that span reads GR. Residues C344, C347, C351, and C364 each coordinate [4Fe-4S] cluster. FAD contacts are provided by A396, E415, Q423, K433, and A460.

In the N-terminal section; belongs to the NADH:flavin oxidoreductase/NADH oxidase family. Homohexamer. It depends on FMN as a cofactor. FAD serves as cofactor. [4Fe-4S] cluster is required as a cofactor. Post-translationally, the N-terminus is blocked.

It carries out the reaction A + NADH + H(+) = AH2 + NAD(+). Its function is as follows. Reduces a range of alternative electron acceptors. The chain is NADH oxidase from Thermoanaerobacter brockii (Thermoanaerobium brockii).